The sequence spans 490 residues: Probable glycine dehydrogenase (decarboxylating) subunit 2 (490 aa).

Lys-273 bears the N6-(pyridoxal phosphate)lysine mark.

It belongs to the GcvP family. C-terminal subunit subfamily. In terms of assembly, the glycine cleavage system is composed of four proteins: P, T, L and H. In this organism, the P 'protein' is a heterodimer of two subunits. Pyridoxal 5'-phosphate is required as a cofactor.

It carries out the reaction N(6)-[(R)-lipoyl]-L-lysyl-[glycine-cleavage complex H protein] + glycine + H(+) = N(6)-[(R)-S(8)-aminomethyldihydrolipoyl]-L-lysyl-[glycine-cleavage complex H protein] + CO2. Its function is as follows. The glycine cleavage system catalyzes the degradation of glycine. The P protein binds the alpha-amino group of glycine through its pyridoxal phosphate cofactor; CO(2) is released and the remaining methylamine moiety is then transferred to the lipoamide cofactor of the H protein. The protein is Probable glycine dehydrogenase (decarboxylating) subunit 2 of Staphylococcus aureus (strain MRSA252).